The following is a 373-amino-acid chain: MPDPILLTPGPLTTSATTRHAMQHDWGSWDAAFNQLTASVCADLVAIARGGDEYVCVPMQGSGTFSVEAALGTLVPRDGVVLVPDNGAYCARILKILGRLGVEAIALPFGEDAAVDPAAVEAAFAREPRITHVALVHLETSAGILNPLDAIAAMCRQHGRRLIVDAMSSFGALPIALADSGIDALVSASGKCLEGVPGMGFAIVRRDALDACEGNSPSLALDLQDQHAYLRKTGQWRFTPPTHVIAALRAALDQYLAEGGQPARGARYAENCRTLVESMRALGFAPFLDASVQAPVIVTFHAPDHPAYDFRRFYDAVRDAGFILYPGKLTKVETFRVGCIGAIDAGDIRRAVAAIAQALESLGIAMQRVSADA.

N6-(pyridoxal phosphate)lysine is present on lysine 191.

Belongs to the class-V pyridoxal-phosphate-dependent aminotransferase family. PhnW subfamily. As to quaternary structure, homodimer. Requires pyridoxal 5'-phosphate as cofactor.

It catalyses the reaction (2-aminoethyl)phosphonate + pyruvate = phosphonoacetaldehyde + L-alanine. Its function is as follows. Involved in phosphonate degradation. This chain is 2-aminoethylphosphonate--pyruvate transaminase, found in Burkholderia ambifaria (strain MC40-6).